The following is a 327-amino-acid chain: Putative ABC transporter ATP-binding protein MM_0887 (327 aa).

A disordered region spans residues Met-1–Thr-44. Residues Thr-28 to Thr-44 show a composition bias toward basic and acidic residues. Residues Ile-47 to Arg-282 form the ABC transporter domain. Gly-81 to Ser-88 contributes to the ATP binding site.

It belongs to the ABC transporter superfamily.

It localises to the cell membrane. Functionally, probably part of an ABC transporter complex. Responsible for energy coupling to the transport system. This is Putative ABC transporter ATP-binding protein MM_0887 from Methanosarcina mazei (strain ATCC BAA-159 / DSM 3647 / Goe1 / Go1 / JCM 11833 / OCM 88) (Methanosarcina frisia).